A 177-amino-acid chain; its full sequence is Large ribosomal subunit protein uL6 (177 aa).

This sequence belongs to the universal ribosomal protein uL6 family. Part of the 50S ribosomal subunit.

This protein binds to the 23S rRNA, and is important in its secondary structure. It is located near the subunit interface in the base of the L7/L12 stalk, and near the tRNA binding site of the peptidyltransferase center. This is Large ribosomal subunit protein uL6 from Azorhizobium caulinodans (strain ATCC 43989 / DSM 5975 / JCM 20966 / LMG 6465 / NBRC 14845 / NCIMB 13405 / ORS 571).